Reading from the N-terminus, the 387-residue chain is MLRSFSHFLQIGSRRQPTYFRCFHKTTVHLNSFKNDPKKELNSNLNEKSVEESSKNETKEQFNSSSIPRESESEGKTASNTSPLSPKKVENLSKLFNDINEDVSIEELKSRFKDHLPFYENYIRNHPLAIEALQKSTAPRQTGLKLNYVSKLDKYVTPLDGYSHLGSEESNGEIPDKWEDFKDDLTFEISSKFSPFDFGDAGKSTSDAEFLSDISGIPKSDLRALMFVPLVRRRVVNQTRKGKIASMYVLTVVGNRNGVAGFGEGKAESYSLAYKQSCGRAVKNMVYIPRYDKRTVYGVIHKKFHAVRLTLRSRPAGFGLRCNPILHEICRCAGIKDISGEILGSKNGMNTVKAMFEALQSQRLPEDIAMERGQKFVDVQREYYKQT.

Residues 1–22 constitute a mitochondrion transit peptide; it reads MLRSFSHFLQIGSRRQPTYFRC. The tract at residues 33–87 is disordered; that stretch reads FKNDPKKELNSNLNEKSVEESSKNETKEQFNSSSIPRESESEGKTASNTSPLSPK. The span at 48–60 shows a compositional bias: basic and acidic residues; that stretch reads KSVEESSKNETKE. A Phosphoserine modification is found at S85. An S5 DRBM domain is found at 225–288; that stretch reads LMFVPLVRRR…GRAVKNMVYI (64 aa).

This sequence belongs to the universal ribosomal protein uS5 family. In terms of assembly, component of the mitochondrial small ribosomal subunit (mt-SSU). Mature yeast 74S mitochondrial ribosomes consist of a small (37S) and a large (54S) subunit. The 37S small subunit contains a 15S ribosomal RNA (15S mt-rRNA) and at least 32 different proteins. The 54S large subunit contains a 21S rRNA (21S mt-rRNA) and at least 45 different proteins. uS3m, uS4m and uS5m form the narrow entry site of the mRNA channel.

The protein localises to the mitochondrion. In terms of biological role, component of the mitochondrial ribosome (mitoribosome), a dedicated translation machinery responsible for the synthesis of mitochondrial genome-encoded proteins, including at least some of the essential transmembrane subunits of the mitochondrial respiratory chain. The mitoribosomes are attached to the mitochondrial inner membrane and translation products are cotranslationally integrated into the membrane. The chain is Small ribosomal subunit protein uS5m (mrp5) from Schizosaccharomyces pombe (strain 972 / ATCC 24843) (Fission yeast).